The sequence spans 258 residues: MKNNYTSLKSPLDEEDELKTDHEIDLEKGLLPEYNSEEEGALPPYSDISKLANPVPEDSSTGPTEIANPNVERRQEFKDSHPNIYFLLRLLISVLAVSVVFFTAWVCVNPLEKSIFGKVAFSVTIGITCPILFIAIFYFYETWTKACGKGIKHFLKKWRNMFFTFCKSPIFCLVLLKAENKLSSHLGDQQWGWKCSASAFTFMAVSSILIFIAETVEPGSCSTDLVKRVQAYCDYEARQYASSNTAIPLREMNPENEA.

The tract at residues 1–71 (MKNNYTSLKS…GPTEIANPNV (71 aa)) is disordered. Over residues 19-30 (KTDHEIDLEKGL) the composition is skewed to basic and acidic residues. The next 3 helical transmembrane spans lie at 84-106 (IYFLLRLLISVLAVSVVFFTAWV), 121-140 (FSVTIGITCPILFIAIFYFY), and 196-216 (SASAFTFMAVSSILIFIAETV).

This sequence belongs to the WTF family. In terms of assembly, homomer. Interacts with other proteins that exhibit high sequence similarity.

Its subcellular location is the spore membrane. The protein resides in the vacuole membrane. Acts as a suppressor component of the dual wtf meiotic drive system, and can suppress but not confer meiotic drive by compatible poisons. Wtf meiotic drive systems promote unequal transmission of alleles from the parental zygote to progeny spores by encoding a poison and an antidote from the same locus; the poison is trans-acting and forms toxic aggregates in all spores within an ascus, wherease the antidote is spore-specific and targets aggregates for degradation by the vacuole. Meiotic drive by wtf systems therefore lead to poisoning of all progeny that do not inherit the dual poison/antidote allele, or express a compatible antidote. The sequence is that of Meiotic drive suppressor wtf20 from Schizosaccharomyces pombe (strain 972 / ATCC 24843) (Fission yeast).